The following is a 638-amino-acid chain: Threonine--tRNA ligase (638 aa).

Residues methionine 1–tyrosine 59 form the TGS domain. The catalytic stretch occupies residues aspartate 243–proline 536. Positions 336, 387, and 513 each coordinate Zn(2+).

This sequence belongs to the class-II aminoacyl-tRNA synthetase family. Homodimer. Zn(2+) serves as cofactor.

It localises to the cytoplasm. The enzyme catalyses tRNA(Thr) + L-threonine + ATP = L-threonyl-tRNA(Thr) + AMP + diphosphate + H(+). Its function is as follows. Catalyzes the attachment of threonine to tRNA(Thr) in a two-step reaction: L-threonine is first activated by ATP to form Thr-AMP and then transferred to the acceptor end of tRNA(Thr). Also edits incorrectly charged L-seryl-tRNA(Thr). The polypeptide is Threonine--tRNA ligase (Aquifex aeolicus (strain VF5)).